Consider the following 553-residue polypeptide: Dihydrolipoyllysine-residue acetyltransferase component of pyruvate dehydrogenase complex (553 aa).

The region spanning 4–78 (AIEIKVPDIG…SEGSVLVMLE (75 aa)) is the Lipoyl-binding 1 domain. The residue at position 44 (Lys-44) is an N6-lipoyllysine. The interval 97-118 (AAAAPAPAPAPAAAPAAAPAAG) is disordered. The Lipoyl-binding 2 domain maps to 122 to 196 (TIEVKVPDIG…AEGTLLLILE (75 aa)). N6-lipoyllysine is present on Lys-162. The region spanning 250–287 (HASPSVRKFARELGVDVSRVPGTGPKGRITQEDVQGYV) is the Peripheral subunit-binding (PSBD) domain. The active site involves His-526.

The protein belongs to the 2-oxoacid dehydrogenase family. In terms of assembly, forms a 24-polypeptide structural core with octahedral symmetry. (R)-lipoate is required as a cofactor.

It carries out the reaction N(6)-[(R)-dihydrolipoyl]-L-lysyl-[protein] + acetyl-CoA = N(6)-[(R)-S(8)-acetyldihydrolipoyl]-L-lysyl-[protein] + CoA. In terms of biological role, the pyruvate dehydrogenase complex catalyzes the overall conversion of pyruvate to acetyl-CoA and CO(2). It contains multiple copies of three enzymatic components: pyruvate dehydrogenase (E1), dihydrolipoamide acetyltransferase (E2) and lipoamide dehydrogenase (E3). This chain is Dihydrolipoyllysine-residue acetyltransferase component of pyruvate dehydrogenase complex (pdhB), found in Cupriavidus necator (strain ATCC 17699 / DSM 428 / KCTC 22496 / NCIMB 10442 / H16 / Stanier 337) (Ralstonia eutropha).